The following is a 355-amino-acid chain: Sesquiterpene synthase-like protein Agr11 (355 aa).

The protein belongs to the terpene synthase family.

The polypeptide is Sesquiterpene synthase-like protein Agr11 (Cyclocybe aegerita (Black poplar mushroom)).